Here is a 344-residue protein sequence, read N- to C-terminus: tRNA N6-adenosine threonylcarbamoyltransferase (344 aa).

Residues His111 and His115 each coordinate Fe cation. Substrate is bound by residues 133 to 137 (LVSGG), Asp166, Gly179, and Asn283. Asp311 is a binding site for Fe cation.

The protein belongs to the KAE1 / TsaD family. Fe(2+) serves as cofactor.

It is found in the cytoplasm. The enzyme catalyses L-threonylcarbamoyladenylate + adenosine(37) in tRNA = N(6)-L-threonylcarbamoyladenosine(37) in tRNA + AMP + H(+). In terms of biological role, required for the formation of a threonylcarbamoyl group on adenosine at position 37 (t(6)A37) in tRNAs that read codons beginning with adenine. Is involved in the transfer of the threonylcarbamoyl moiety of threonylcarbamoyl-AMP (TC-AMP) to the N6 group of A37, together with TsaE and TsaB. TsaD likely plays a direct catalytic role in this reaction. The polypeptide is tRNA N6-adenosine threonylcarbamoyltransferase (Orientia tsutsugamushi (strain Boryong) (Rickettsia tsutsugamushi)).